The chain runs to 136 residues: Large ribosomal subunit protein uL16 (136 aa).

It belongs to the universal ribosomal protein uL16 family. In terms of assembly, part of the 50S ribosomal subunit.

Its function is as follows. Binds 23S rRNA and is also seen to make contacts with the A and possibly P site tRNAs. The chain is Large ribosomal subunit protein uL16 from Wigglesworthia glossinidia brevipalpis.